A 208-amino-acid chain; its full sequence is Small ribosomal subunit protein uS4A (208 aa).

Positions 98–161 (LRLDNVVFRM…RKVLRISEAL (64 aa)) constitute an S4 RNA-binding domain.

This sequence belongs to the universal ribosomal protein uS4 family. As to quaternary structure, part of the 30S ribosomal subunit. Contacts protein S5. The interaction surface between S4 and S5 is involved in control of translational fidelity.

In terms of biological role, one of the primary rRNA binding proteins, it binds directly to 16S rRNA where it nucleates assembly of the body of the 30S subunit. With S5 and S12 plays an important role in translational accuracy. The protein is Small ribosomal subunit protein uS4A of Myxococcus xanthus (strain DK1622).